The sequence spans 181 residues: ATP-dependent protease subunit HslV (181 aa).

The active site involves Thr7. Residues Ala165, Cys168, and Thr171 each contribute to the Na(+) site.

It belongs to the peptidase T1B family. HslV subfamily. As to quaternary structure, a double ring-shaped homohexamer of HslV is capped on each side by a ring-shaped HslU homohexamer. The assembly of the HslU/HslV complex is dependent on binding of ATP.

The protein resides in the cytoplasm. The enzyme catalyses ATP-dependent cleavage of peptide bonds with broad specificity.. Allosterically activated by HslU binding. Functionally, protease subunit of a proteasome-like degradation complex believed to be a general protein degrading machinery. The sequence is that of ATP-dependent protease subunit HslV from Lysinibacillus sphaericus (strain C3-41).